A 236-amino-acid polypeptide reads, in one-letter code: Small ribosomal subunit protein uS3 (236 aa).

In terms of domain architecture, KH type-2 spans 39–112; the sequence is IREFITKHPK…RINLKVEEVG (74 aa). The disordered stretch occupies residues 212–236; it reads YGDDNDGADAQTGQASKKPKRSYKR.

It belongs to the universal ribosomal protein uS3 family. Part of the 30S ribosomal subunit. Forms a tight complex with proteins S10 and S14.

Functionally, binds the lower part of the 30S subunit head. Binds mRNA in the 70S ribosome, positioning it for translation. The sequence is that of Small ribosomal subunit protein uS3 from Rhodopirellula baltica (strain DSM 10527 / NCIMB 13988 / SH1).